Reading from the N-terminus, the 466-residue chain is Argininosuccinate lyase (466 aa).

The protein belongs to the lyase 1 family. Argininosuccinate lyase subfamily.

The protein localises to the cytoplasm. It carries out the reaction 2-(N(omega)-L-arginino)succinate = fumarate + L-arginine. It participates in amino-acid biosynthesis; L-arginine biosynthesis; L-arginine from L-ornithine and carbamoyl phosphate: step 3/3. This is Argininosuccinate lyase from Syntrophobacter fumaroxidans (strain DSM 10017 / MPOB).